The following is a 204-amino-acid chain: UPF0637 protein lwe1043 (204 aa).

It belongs to the UPF0637 family.

This Listeria welshimeri serovar 6b (strain ATCC 35897 / DSM 20650 / CCUG 15529 / CIP 8149 / NCTC 11857 / SLCC 5334 / V8) protein is UPF0637 protein lwe1043.